The primary structure comprises 42 residues: Purine nucleoside phosphorylase DeoD-type (42 aa).

8–9 is an a purine D-ribonucleoside binding site; it reads SD. The active-site Proton donor is the aspartate 9.

This sequence belongs to the PNP/UDP phosphorylase family. In terms of assembly, homohexamer; trimer of homodimers.

The catalysed reaction is a purine D-ribonucleoside + phosphate = a purine nucleobase + alpha-D-ribose 1-phosphate. The enzyme catalyses a purine 2'-deoxy-D-ribonucleoside + phosphate = a purine nucleobase + 2-deoxy-alpha-D-ribose 1-phosphate. In terms of biological role, catalyzes the reversible phosphorolytic breakdown of the N-glycosidic bond in the beta-(deoxy)ribonucleoside molecules, with the formation of the corresponding free purine bases and pentose-1-phosphate. In Mycoplasmoides pirum (Mycoplasma pirum), this protein is Purine nucleoside phosphorylase DeoD-type.